Reading from the N-terminus, the 452-residue chain is uncharacterized protein (452 aa).

Residue 72–79 coordinates ATP; that stretch reads GPPGSGKT.

It belongs to the AAA ATPase family. RarA/MGS1/WRNIP1 subfamily.

This is an uncharacterized protein from Mycobacterium tuberculosis (strain ATCC 25618 / H37Rv).